We begin with the raw amino-acid sequence, 744 residues long: Catalase-peroxidase (744 aa).

The interval 1 to 21 is disordered; sequence MANESKCPFHQTAGGGTSNRD. A cross-link (tryptophyl-tyrosyl-methioninium (Trp-Tyr) (with M-267)) is located at residues 91–241; the sequence is WHSAGTYRIG…LAAVQMGLIY (151 aa). His-92 serves as the catalytic Proton acceptor. Residues 241 to 267 constitute a cross-link (tryptophyl-tyrosyl-methioninium (Tyr-Met) (with W-91)); that stretch reads YVNPEGPEGNPDPVASGKDIRDTFGRM. Residue His-282 participates in heme b binding. A disordered region spans residues 361-387; the sequence is GAHQWRPKDGKGANTVPDAHDTTKRHA.

It belongs to the peroxidase family. Peroxidase/catalase subfamily. In terms of assembly, homodimer or homotetramer. Heme b is required as a cofactor. Formation of the three residue Trp-Tyr-Met cross-link is important for the catalase, but not the peroxidase activity of the enzyme.

It catalyses the reaction H2O2 + AH2 = A + 2 H2O. It carries out the reaction 2 H2O2 = O2 + 2 H2O. In terms of biological role, bifunctional enzyme with both catalase and broad-spectrum peroxidase activity. The protein is Catalase-peroxidase of Pseudomonas entomophila (strain L48).